An 84-amino-acid chain; its full sequence is U1-hexatoxin-Iw1a (84 aa).

The signal sequence occupies residues 1–18; the sequence is MLKFVVVICLVIMAITFA. 5 disulfides stabilise this stretch: Cys-21/Cys-32, Cys-26/Cys-40, Cys-31/Cys-66, Cys-50/Cys-74, and Cys-68/Cys-81.

Belongs to the MIT-like AcTx family. As to expression, expressed by the venom gland.

The protein localises to the secreted. The polypeptide is U1-hexatoxin-Iw1a (Illawarra wisharti (Illawarra funnel-web spider)).